The following is a 332-amino-acid chain: 3-dehydrosphinganine reductase (332 aa).

The signal sequence occupies residues 1-25 (MLLVVAAFIVAFVLLLYMISPLISP). NADPH-binding residues include Gly39, Ser41, Ser42, Gly43, Arg64, Asp65, Lys68, and Asp93. The GXSXG motif lies at 39–43 (GGSSG). The active-site Proton donor is Ser172. The Proton acceptor role is filled by Tyr186. 2 residues coordinate NADP(+): Tyr186 and Lys190. Lys190 (lowers pKa of active site Tyr) is an active-site residue.

It belongs to the short-chain dehydrogenases/reductases (SDR) family.

The protein localises to the endoplasmic reticulum. The enzyme catalyses sphinganine + NADP(+) = 3-oxosphinganine + NADPH + H(+). The protein operates within lipid metabolism; sphingolipid metabolism. Its function is as follows. Catalyzes the reduction of 3'-oxosphinganine (3-ketodihydrosphingosine/KDS) to sphinganine (dihydrosphingosine/DHS), the second step of de novo sphingolipid biosynthesis. This chain is 3-dehydrosphinganine reductase (kdsr), found in Danio rerio (Zebrafish).